A 593-amino-acid polypeptide reads, in one-letter code: Aspartate--tRNA(Asp/Asn) ligase (593 aa).

An L-aspartate-binding site is contributed by E172. Residues 196 to 199 are aspartate; that stretch reads QLFK. R218 contacts L-aspartate. ATP-binding positions include 218 to 220 and Q227; that span reads RDE. H450 contacts L-aspartate. Residue E484 participates in ATP binding. R491 contacts L-aspartate. ATP is bound at residue 536–539; it reads GLDR.

It belongs to the class-II aminoacyl-tRNA synthetase family. Type 1 subfamily. Homodimer.

The protein localises to the cytoplasm. It carries out the reaction tRNA(Asx) + L-aspartate + ATP = L-aspartyl-tRNA(Asx) + AMP + diphosphate. Its function is as follows. Aspartyl-tRNA synthetase with relaxed tRNA specificity since it is able to aspartylate not only its cognate tRNA(Asp) but also tRNA(Asn). Reaction proceeds in two steps: L-aspartate is first activated by ATP to form Asp-AMP and then transferred to the acceptor end of tRNA(Asp/Asn). This chain is Aspartate--tRNA(Asp/Asn) ligase, found in Nitrosomonas europaea (strain ATCC 19718 / CIP 103999 / KCTC 2705 / NBRC 14298).